The sequence spans 465 residues: Ribulose bisphosphate carboxylase large chain (465 aa).

At lysine 4 the chain carries N6,N6,N6-trimethyllysine. Substrate is bound by residues asparagine 113 and threonine 163. Lysine 165 serves as the catalytic Proton acceptor. Position 167 (lysine 167) interacts with substrate. Lysine 191, aspartate 193, and glutamate 194 together coordinate Mg(2+). Lysine 191 carries the post-translational modification N6-carboxylysine. Residue histidine 284 is the Proton acceptor of the active site. Arginine 285, histidine 317, and serine 369 together coordinate substrate.

It belongs to the RuBisCO large chain family. Type I subfamily. In terms of assembly, heterohexadecamer of 8 large chains and 8 small chains; disulfide-linked. The disulfide link is formed within the large subunit homodimers. The cofactor is Mg(2+). Post-translationally, the disulfide bond which can form in the large chain dimeric partners within the hexadecamer appears to be associated with oxidative stress and protein turnover.

It localises to the plastid. The protein resides in the chloroplast. The catalysed reaction is 2 (2R)-3-phosphoglycerate + 2 H(+) = D-ribulose 1,5-bisphosphate + CO2 + H2O. The enzyme catalyses D-ribulose 1,5-bisphosphate + O2 = 2-phosphoglycolate + (2R)-3-phosphoglycerate + 2 H(+). In terms of biological role, ruBisCO catalyzes two reactions: the carboxylation of D-ribulose 1,5-bisphosphate, the primary event in carbon dioxide fixation, as well as the oxidative fragmentation of the pentose substrate in the photorespiration process. Both reactions occur simultaneously and in competition at the same active site. In Cornus oblonga, this protein is Ribulose bisphosphate carboxylase large chain.